The chain runs to 394 residues: MNKYKRIFLVVMDSVGIGEAPDAEQFGDLGSDTIGHIAEHMNGLHMPNMVKLGLGNIREMKGISKVEKPLGYYTKMQEKSTGKDTMTGHWEIMGLYIDTPFQVFPEGFPKELLDELEEKTGRKIIGNKPASGTEVLVELGQEQMETGSLIVYTSADSVLQIAAHEEVVPLEELYKICKIARELTLDEKYMVGRVIARPFVGEPGNFTRTPNRHDYALKPFGRTVMNELKDSDYDVIAIGKIADIYDGEGVTESLRTKSNMDGMDKLVDTLNMDFTGISFLNLVDFDALFGHRRDPQGYGEALQEYDARLPEVFEKLKEDDLLLITADHGNDPVHPGTDHTREYVPLLAYSPSMKEGGQELSLRQTFADIGATVAENFNVKMPEHGTSFLNELKK.

Positions 13, 286, 291, 327, 328, and 339 each coordinate Mn(2+).

The protein belongs to the phosphopentomutase family. The cofactor is Mn(2+).

Its subcellular location is the cytoplasm. It catalyses the reaction 2-deoxy-alpha-D-ribose 1-phosphate = 2-deoxy-D-ribose 5-phosphate. The enzyme catalyses alpha-D-ribose 1-phosphate = D-ribose 5-phosphate. Its pathway is carbohydrate degradation; 2-deoxy-D-ribose 1-phosphate degradation; D-glyceraldehyde 3-phosphate and acetaldehyde from 2-deoxy-alpha-D-ribose 1-phosphate: step 1/2. Isomerase that catalyzes the conversion of deoxy-ribose 1-phosphate (dRib-1-P) and ribose 1-phosphate (Rib-1-P) to deoxy-ribose 5-phosphate (dRib-5-P) and ribose 5-phosphate (Rib-5-P), respectively. In Bacillus mycoides (strain KBAB4) (Bacillus weihenstephanensis), this protein is Phosphopentomutase.